A 465-amino-acid chain; its full sequence is Ribulose bisphosphate carboxylase large chain (465 aa).

K4 is subject to N6,N6,N6-trimethyllysine. Positions 113 and 163 each coordinate substrate. K165 serves as the catalytic Proton acceptor. K167 contributes to the substrate binding site. Mg(2+) is bound by residues K191, D193, and E194. The residue at position 191 (K191) is an N6-carboxylysine. H284 functions as the Proton acceptor in the catalytic mechanism. Substrate contacts are provided by R285, H317, and S369.

It belongs to the RuBisCO large chain family. Type I subfamily. In terms of assembly, heterohexadecamer of 8 large chains and 8 small chains; disulfide-linked. The disulfide link is formed within the large subunit homodimers. Requires Mg(2+) as cofactor. The disulfide bond which can form in the large chain dimeric partners within the hexadecamer appears to be associated with oxidative stress and protein turnover.

It localises to the plastid. The protein localises to the chloroplast. It carries out the reaction 2 (2R)-3-phosphoglycerate + 2 H(+) = D-ribulose 1,5-bisphosphate + CO2 + H2O. It catalyses the reaction D-ribulose 1,5-bisphosphate + O2 = 2-phosphoglycolate + (2R)-3-phosphoglycerate + 2 H(+). In terms of biological role, ruBisCO catalyzes two reactions: the carboxylation of D-ribulose 1,5-bisphosphate, the primary event in carbon dioxide fixation, as well as the oxidative fragmentation of the pentose substrate in the photorespiration process. Both reactions occur simultaneously and in competition at the same active site. This is Ribulose bisphosphate carboxylase large chain from Ephedra tweediana (Vining horsetail).